Here is a 163-residue protein sequence, read N- to C-terminus: Glycine cleavage system H-like protein gcvH5, mitochondrial (163 aa).

Residues 1–23 (MFLFKTTNNLRKSLSNKFFCTRY) constitute a mitochondrion transit peptide. The 87-residue stretch at 50–136 (IGTLGLTENG…MSKGWLCKIK (87 aa)) folds into the Lipoyl-binding domain.

Belongs to the GcvH family.

It is found in the mitochondrion. This chain is Glycine cleavage system H-like protein gcvH5, mitochondrial (gcvH5), found in Dictyostelium discoideum (Social amoeba).